A 131-amino-acid polypeptide reads, in one-letter code: Small ribosomal subunit protein bS6 (131 aa).

Positions 98–131 (EASPMVKAKDERRERRDDFANETADDAEAGDSEE) are disordered. A compositionally biased stretch (basic and acidic residues) spans 104-116 (KAKDERRERRDDF). Positions 120-131 (TADDAEAGDSEE) are enriched in acidic residues.

The protein belongs to the bacterial ribosomal protein bS6 family.

Binds together with bS18 to 16S ribosomal RNA. The protein is Small ribosomal subunit protein bS6 of Cronobacter sakazakii (strain ATCC BAA-894) (Enterobacter sakazakii).